A 325-amino-acid chain; its full sequence is E3 ubiquitin-protein ligase SIAH2 (325 aa).

The span at 1 to 15 (MSRPSSTGPSANKPC) shows a compositional bias: polar residues. The segment at 1–43 (MSRPSSTGPSANKPCSKQPPPPQTPHAPSPAAPPAAATISAAG) is disordered. A Phosphoserine modification is found at serine 6. A Phosphoserine; by DYRK2 modification is found at serine 16. A compositionally biased stretch (pro residues) spans 17–33 (KQPPPPQTPHAPSPAAP). Threonine 24 is modified (phosphothreonine; by MAPK14). Phosphoserine; by DYRK2 and MAPK14 is present on serine 29. Positions 34-43 (PAAATISAAG) are enriched in low complexity. Serine 69 is subject to Phosphoserine; by DYRK2. An RING-type zinc finger spans residues 81–116 (CPVCFDYVLPPILQCQAGHLVCNQCRQKLSCCPTCR). Threonine 120 bears the Phosphothreonine; by DYRK2 mark. The SBD stretch occupies residues 131-323 (VASAVLFPCK…LGINVTISTC (193 aa)). Residues 134–194 (AVLFPCKYAT…VMSHLMHAHK (61 aa)) form an SIAH-type zinc finger. Zn(2+)-binding residues include cysteine 139, cysteine 146, histidine 158, cysteine 162, cysteine 169, cysteine 176, histidine 188, and histidine 193.

It belongs to the SINA (Seven in absentia) family. In terms of assembly, homodimer. Interacts with UBE2E2. Interacts with VAV1, without mediating its ubiquitin-mediated degradation. Interacts with CACYBP/SIP. Probable component of some large E3 complex possibly composed of UBE2D1, SIAH2, CACYBP/SIP, SKP1, APC and TBL1X. Interacts with UBE2I. Interacts with PEG10, which may inhibit its activity. Interacts with EGLN2 and SNCAIP. Interacts with DYRK2. Interacts with PEG3. Interacts with NR1D1 and NR1D2. Interacts with DCC. Interacts with AXIN1. Post-translationally, phosphorylated at Ser-29 by DYRK2; this increases the ubiquitin ligase activity and promotes degradation of EGLN3. Phosphorylated at Thr-24 and Ser-29 by MAPK14, which mediates the degradation by the proteasome of EGLN3. Widely expressed at low level in embryos and adults. Expressed in a specific population of germ cells within both the mouse ovary and testis. Absent in primordial oocytes but expressed in all growing oocytes, coincident with their recruitment from the pool of quiescent cells. Its level of expression increases as the oocytes mature. Expressed in Graafian follicles and in fertilized zygotes up until the two cell stage, a time of extensive maternal transcript degradation and zygotic gene activation. Expressed in the testis from postmeiotic spermatids.

Its subcellular location is the cytoplasm. The protein resides in the nucleus. It carries out the reaction S-ubiquitinyl-[E2 ubiquitin-conjugating enzyme]-L-cysteine + [acceptor protein]-L-lysine = [E2 ubiquitin-conjugating enzyme]-L-cysteine + N(6)-ubiquitinyl-[acceptor protein]-L-lysine.. It participates in protein modification; protein ubiquitination. E3 ubiquitin-protein ligase that mediates ubiquitination and subsequent proteasomal degradation of target proteins. E3 ubiquitin ligases accept ubiquitin from an E2 ubiquitin-conjugating enzyme in the form of a thioester and then directly transfers the ubiquitin to targeted substrates. Mediates E3 ubiquitin ligase activity either through direct binding to substrates or by functioning as the essential RING domain subunit of larger E3 complexes. Mediates ubiquitination and proteasomal degradation of DYRK2 in response to hypoxia. Promotes monoubiquitination of SNCA. Triggers the ubiquitin-mediated degradation of many substrates, including proteins involved in transcription regulation (GPS2, POU2AF1, PML, NCOR1), a cell surface receptor (DCC), an antiapoptotic protein (BAG1), and a protein involved in synaptic vesicle function in neurons (SYP). It is thereby involved in apoptosis, tumor suppression, cell cycle, transcription and signaling processes. Has some overlapping function with SIAH1. Triggers the ubiquitin-mediated degradation of TRAF2, whereas SIAH1 does not. Regulates cellular clock function via ubiquitination of the circadian transcriptional repressors NR1D1 and NR1D2 leading to their proteasomal degradation. Plays an important role in mediating the rhythmic degradation/clearance of NR1D1 and NR1D2 contributing to their circadian profile of protein abundance. Mediates ubiquitination and degradation of EGLN2 and EGLN3 in response to the unfolded protein response (UPR), leading to their degradation and subsequent stabilization of ATF4. Also part of the Wnt signaling pathway in which it mediates the Wnt-induced ubiquitin-mediated proteasomal degradation of AXIN1. The protein is E3 ubiquitin-protein ligase SIAH2 (Siah2) of Mus musculus (Mouse).